The sequence spans 488 residues: 3-octaprenyl-4-hydroxybenzoate carboxy-lyase (488 aa).

Residue asparagine 172 coordinates Mn(2+). Residues isoleucine 175–arginine 177, arginine 189–leucine 191, and arginine 194–glycine 195 contribute to the prenylated FMN site. Glutamate 238 is a binding site for Mn(2+). Aspartate 287 functions as the Proton donor in the catalytic mechanism.

The protein belongs to the UbiD family. In terms of assembly, homohexamer. The cofactor is prenylated FMN. Requires Mn(2+) as cofactor.

The protein localises to the cell membrane. The catalysed reaction is a 4-hydroxy-3-(all-trans-polyprenyl)benzoate + H(+) = a 2-(all-trans-polyprenyl)phenol + CO2. It functions in the pathway cofactor biosynthesis; ubiquinone biosynthesis. Its function is as follows. Catalyzes the decarboxylation of 3-octaprenyl-4-hydroxy benzoate to 2-octaprenylphenol, an intermediate step in ubiquinone biosynthesis. The protein is 3-octaprenyl-4-hydroxybenzoate carboxy-lyase of Stutzerimonas stutzeri (strain A1501) (Pseudomonas stutzeri).